We begin with the raw amino-acid sequence, 374 residues long: Glutamate 5-kinase (374 aa).

Lys-16 is an ATP binding site. Positions 56, 143, and 155 each coordinate substrate. An ATP-binding site is contributed by 175 to 176; sequence TD. The PUA domain occupies 282 to 360; the sequence is RGRVVLDAGA…SEIEAVLGYV (79 aa).

The protein belongs to the glutamate 5-kinase family.

It is found in the cytoplasm. The enzyme catalyses L-glutamate + ATP = L-glutamyl 5-phosphate + ADP. Its pathway is amino-acid biosynthesis; L-proline biosynthesis; L-glutamate 5-semialdehyde from L-glutamate: step 1/2. Functionally, catalyzes the transfer of a phosphate group to glutamate to form L-glutamate 5-phosphate. In Ralstonia nicotianae (strain ATCC BAA-1114 / GMI1000) (Ralstonia solanacearum), this protein is Glutamate 5-kinase.